The chain runs to 62 residues: Large ribosomal subunit protein eL24 (62 aa).

Zn(2+)-binding residues include cysteine 6, cysteine 9, cysteine 32, and cysteine 36. Residues 6–36 form a C4-type zinc finger; sequence CSFCGELLEPGTGLLFAKRDGSTYYFCSSKC.

The protein belongs to the eukaryotic ribosomal protein eL24 family. As to quaternary structure, part of the 50S ribosomal subunit. Forms a cluster with proteins L3 and L14. The cofactor is Zn(2+).

Functionally, binds to the 23S rRNA. This Methanococcoides burtonii (strain DSM 6242 / NBRC 107633 / OCM 468 / ACE-M) protein is Large ribosomal subunit protein eL24.